The primary structure comprises 520 residues: MRIFRFTSISPRILPSNHYSTFPLKQNVSSLSPAKYIAGALQEHINSPAPKAGKKIHADIIKTGFQPDLNISIKLLILHLKCGCLSYARQVFDELPKPTLSAYNYMISGYLKHGLVKELLLLVQRMSYSGEKADGYTLSMVLKASNSRGSTMILPRSLCRLVHARIIKCDVELDDVLITALVDTYVKSGKLESARTVFETMKDENVVCCTSMISGYMNQGFVEDAEEIFNTTKVKDIVVYNAMVEGFSRSGETAKRSVDMYISMQRAGFHPNISTFASVIGACSVLTSHEVGQQVHAQIMKSGVYTHIKMGSSLLDMYAKCGGINDARRVFDQMQEKNVFSWTSMIDGYGKNGNPEEALELFTRMKEFRIEPNYVTFLGALSACSHSGLVDKGYEIFESMQRDYSMKPKMEHYACIVDLMGRAGDLNKAFEFARAMPERPDSDIWAALLSSCNLHGNVELASIAASELFKLNADKRPGAYLALSNVYASNDKWDNVSKIREVMKRRRISKTIGRSWTSED.

Residues 1-19 (MRIFRFTSISPRILPSNHY) constitute a mitochondrion transit peptide. PPR repeat units lie at residues 68 to 98 (DLNI…LPKP), 99 to 133 (TLSA…GEKA), 134 to 168 (DGYT…RIIK), 174 to 208 (DDVL…NVVC), 209 to 235 (CTSM…TKVK), 236 to 271 (DIVV…GFHP), 272 to 306 (NIST…GVYT), 307 to 337 (HIKM…MQEK), 338 to 372 (NVFS…RIEP), 373 to 403 (NYVT…MQRD), and 409 to 439 (KMEH…MPER). The segment at 444 to 520 (IWAALLSSCN…TIGRSWTSED (77 aa)) is type E motif.

Belongs to the PPR family. PCMP-E subfamily.

It localises to the mitochondrion. In Arabidopsis thaliana (Mouse-ear cress), this protein is Pentatricopeptide repeat-containing protein At1g28690, mitochondrial (PCMP-E34).